The sequence spans 207 residues: Ras-related protein Rab-8A (207 aa).

Ser17, Gly18, Val19, Gly20, Lys21, Thr22, Cys23, Ser35, Ser39, and Thr40 together coordinate GTP. Residue Thr22 participates in Mg(2+) binding. Short sequence motifs (switch) lie at residues 31–45 (DAFNSTFISTIGIDF) and 63–80 (DTAGQERFRTITTAYYRG). Mg(2+) contacts are provided by Thr40 and Asp63. Residue Gly66 participates in GTP binding. Thr72 is subject to Phosphothreonine. Asn121, Lys122, Asp124, Ala152, and Lys153 together coordinate GTP. Phosphoserine is present on residues Ser181 and Ser185. Cys204 is modified (cysteine methyl ester). A lipid anchor (S-geranylgeranyl cysteine) is attached at Cys204. The propeptide at 205-207 (VLL) is removed in mature form.

Belongs to the small GTPase superfamily. Rab family. Interacts (GTP-bound form) with MICALL1; regulates RAB8A association with recycling endosomes. Interacts with MICALL2; competes with RAB13 and is involved in E-cadherin endocytic recycling. Interacts (GTP-bound form) with MICAL1, MICALCL, MICAL3, EHBP1 and EHBP1L1; at least in case of MICAL1, MICALCL, MICAL3 and EHBP1L1 two molecules of RAB8A can bind to one molecule of the effector protein; ternary complexes of RAB8A, RAB13 and either MICAL1 or EHBP1L1 are possible. Interacts with EHD1. Interacts with MAP4K2 and SYTL4. Interacts with SGSM1 and SGSM3. Interacts with RABIF, RIMS2, RPH3A and RPH3A. Interacts with OPTN. Interacts with RAB3IP, RAB3IP functions as guanine exchange factor (GEF). Interacts with MYO5B. Interacts with CIMAP3. Interacts with BIRC6/bruce. Interacts with OCRL. Interacts with AHI1. Interacts with DCDC1. Interacts with LRRK2; interaction facilitates phosphorylation of Thr-72. Interacts with RAB31P, GDI1, GDI2, CHM, CHML, RABGGTA, RABGGTB, TBC1D15 and INPP5B; these interactions are dependent on Thr-72 not being phosphorylated. Interacts with RILPL1 and RILPL2; these interactions are dependent on the phosphorylation of Thr-72 by LRRK2. Interacts with DZIP1; prevents inhibition by the GDP-dissociation inhibitor GDI2. Interacts (in GDP-bound form) with RAB3IP/Rabin8, RAB3IP functions as guanine exchange factor (GEF) towards RAB8A. Interacts (in GDP-bound form) with RPGR, RPGR functions as GEF towards RAB8A. Mg(2+) is required as a cofactor. In terms of processing, phosphorylation of Thr-72 in the switch II region by LRRK2 prevents the association of RAB regulatory proteins, including CHM, CHML and RAB GDP dissociation inhibitors GDI1 and GDI2. Phosphorylation by LRRK2 is required for localization to stressed lysosomes.

It is found in the cell membrane. The protein localises to the golgi apparatus. The protein resides in the endosome membrane. Its subcellular location is the recycling endosome membrane. It localises to the cell projection. It is found in the cilium. The protein localises to the cytoplasmic vesicle. The protein resides in the phagosome membrane. Its subcellular location is the cytoplasm. It localises to the cytoskeleton. It is found in the microtubule organizing center. The protein localises to the centrosome. The protein resides in the centriole. Its subcellular location is the cilium basal body. It localises to the midbody. It is found in the lysosome. It carries out the reaction GTP + H2O = GDP + phosphate + H(+). With respect to regulation, regulated by guanine nucleotide exchange factors (GEFs) such as RAB3IP/Rabin8 and RPGR which promote the exchange of bound GDP for free GTP, GTPase activating proteins (GAPs) which increase the GTP hydrolysis activity, and GDP dissociation inhibitors (GDIs) which inhibit the dissociation of the nucleotide from the GTPase. Activated in response to insulin. In terms of biological role, the small GTPases Rab are key regulators of intracellular membrane trafficking, from the formation of transport vesicles to their fusion with membranes. Rabs cycle between an inactive GDP-bound form and an active GTP-bound form that is able to recruit to membranes different sets of downstream effectors directly responsible for vesicle formation, movement, tethering and fusion. RAB8A is involved in polarized vesicular trafficking and neurotransmitter release. Together with RAB11A, RAB3IP, the exocyst complex, PARD3, PRKCI, ANXA2, CDC42 and DNMBP promotes transcytosis of PODXL to the apical membrane initiation sites (AMIS), apical surface formation and lumenogenesis. Regulates the compacted morphology of the Golgi. Together with MYO5B and RAB11A participates in epithelial cell polarization. Also involved in membrane trafficking to the cilium and ciliogenesis. Together with MICALL2, may also regulate adherens junction assembly. May play a role in insulin-induced transport to the plasma membrane of the glucose transporter GLUT4 and therefore play a role in glucose homeostasis. Involved in autophagy. Participates in the export of a subset of neosynthesized proteins through a Rab8-Rab10-Rab11-dependent endososomal export route. Targeted to and stabilized on stressed lysosomes through LRRK2 phosphorylation. Suppresses stress-induced lysosomal enlargement through EHBP1 and EHNP1L1 effector proteins. The protein is Ras-related protein Rab-8A (RAB8A) of Bos taurus (Bovine).